The chain runs to 549 residues: Myotubularin-related protein 9 (549 aa).

Position 1 is an N-acetylmethionine (Met1). The 96-residue stretch at 4-99 (AELIKTPRVD…LNIASSIEAL (96 aa)) folds into the GRAM domain. Residues 123–498 (GWHSFLPEQE…QSLPLWEGIF (376 aa)) form the Myotubularin phosphatase domain. Positions 508–542 (LDEAYEEMVNIIEYNKELQAKVNILRRQLAELETE) form a coiled coil. A Phosphoserine modification is found at Ser548.

The protein belongs to the protein-tyrosine phosphatase family. Non-receptor class myotubularin subfamily. In terms of assembly, homodimer. Heterodimer (via C-terminus) with lipid phosphatase MTMR6 (via C-terminus). Heterodimer (via coiled coil domain) with lipid phosphatase MTMR7 (via C-terminus). Heterodimer with lipid phosphatase MTMR8. In terms of tissue distribution, expressed in many tissues.

It localises to the cytoplasm. The protein resides in the cell projection. The protein localises to the ruffle membrane. Its subcellular location is the perinuclear region. It is found in the endoplasmic reticulum. Its function is as follows. Acts as an adapter for myotubularin-related phosphatases. Increases lipid phosphatase MTMR6 catalytic activity, specifically towards phosphatidylinositol 3,5-bisphosphate and MTMR6 binding affinity for phosphorylated phosphatidylinositols. Positively regulates lipid phosphatase MTMR7 catalytic activity. Increases MTMR8 catalytic activity towards phosphatidylinositol 3-phosphate. The formation of the MTMR6-MTMR9 complex, stabilizes both MTMR6 and MTMR9 protein levels. Stabilizes MTMR8 protein levels. Plays a role in the late stages of macropinocytosis possibly by regulating MTMR6-mediated dephosphorylation of phosphatidylinositol 3-phosphate in membrane ruffles. Negatively regulates autophagy, in part via its association with MTMR8. Negatively regulates DNA damage-induced apoptosis, in part via its association with MTMR6. Does not bind mono-, di- and tri-phosphorylated phosphatidylinositols, phosphatidic acid and phosphatidylserine. In Homo sapiens (Human), this protein is Myotubularin-related protein 9 (MTMR9).